A 471-amino-acid polypeptide reads, in one-letter code: Anthocyanidin 3-O-glucosyltransferase (471 aa).

His24 acts as the Proton acceptor in catalysis. An an anthocyanidin-binding site is contributed by His24. The Charge relay role is filled by Asp130. Thr152 is a UDP-alpha-D-glucose binding site. An an anthocyanidin-binding site is contributed by His161. Residues Ala352, Gln354, His369, Trp372, Ser374, and Glu377 each contribute to the UDP-alpha-D-glucose site. Gly392 contacts an anthocyanidin. Residues Asp393 and Gln394 each coordinate UDP-alpha-D-glucose.

This sequence belongs to the UDP-glycosyltransferase family.

It catalyses the reaction an anthocyanidin + UDP-alpha-D-glucose + H(+) = an anthocyanidin 3-O-beta-D-glucoside + UDP. It participates in pigment biosynthesis; anthocyanin biosynthesis. In terms of biological role, in the presence of other necessary color factors, this glycosylation reaction allows the accumulation of anthocyanin pigments. The sequence is that of Anthocyanidin 3-O-glucosyltransferase (BZ1) from Zea mays (Maize).